A 238-amino-acid polypeptide reads, in one-letter code: NADH-quinone oxidoreductase subunit I (238 aa).

2 consecutive 4Fe-4S ferredoxin-type domains span residues 81-111 and 123-152; these read LVPR…IEAG and VKFV…MDSG. Residues Cys-91, Cys-94, Cys-97, Cys-101, Cys-132, Cys-135, Cys-138, and Cys-142 each contribute to the [4Fe-4S] cluster site.

The protein belongs to the complex I 23 kDa subunit family. In terms of assembly, NDH-1 is composed of 14 different subunits. Subunits NuoA, H, J, K, L, M, N constitute the membrane sector of the complex. [4Fe-4S] cluster is required as a cofactor.

It localises to the cell inner membrane. The catalysed reaction is a quinone + NADH + 5 H(+)(in) = a quinol + NAD(+) + 4 H(+)(out). NDH-1 shuttles electrons from NADH, via FMN and iron-sulfur (Fe-S) centers, to quinones in the respiratory chain. The immediate electron acceptor for the enzyme in this species is believed to be ubiquinone. Couples the redox reaction to proton translocation (for every two electrons transferred, four hydrogen ions are translocated across the cytoplasmic membrane), and thus conserves the redox energy in a proton gradient. This Anaeromyxobacter sp. (strain Fw109-5) protein is NADH-quinone oxidoreductase subunit I.